A 78-amino-acid polypeptide reads, in one-letter code: Large ribosomal subunit protein bL28 (78 aa).

It belongs to the bacterial ribosomal protein bL28 family.

The chain is Large ribosomal subunit protein bL28 (rpmB) from Xylella fastidiosa (strain 9a5c).